A 354-amino-acid polypeptide reads, in one-letter code: Peptide chain release factor 1 (354 aa).

Q230 bears the N5-methylglutamine mark.

Belongs to the prokaryotic/mitochondrial release factor family. Methylated by PrmC. Methylation increases the termination efficiency of RF1.

The protein localises to the cytoplasm. In terms of biological role, peptide chain release factor 1 directs the termination of translation in response to the peptide chain termination codons UAG and UAA. The chain is Peptide chain release factor 1 from Thermus thermophilus (strain ATCC BAA-163 / DSM 7039 / HB27).